The primary structure comprises 287 residues: Putative syntaxin-4 (287 aa).

Over 1-262 (MHQISGINAA…NRKWKIVTCI (262 aa)) the chain is Cytoplasmic. Residues 65–97 (KCRKLNDHVDKFIAQARGIRRRLADASEELVQY) are a coiled coil. One can recognise a t-SNARE coiled-coil homology domain in the interval 184-246 (FDDMKNRATD…EQAQQNVRQA (63 aa)). Residues 263–283 (ALIVLLLVVVYLLSHFLGAII) form a helical; Anchor for type IV membrane protein membrane-spanning segment. Over 284–287 (PGWK) the chain is Extracellular.

Belongs to the syntaxin family.

It localises to the membrane. Potentially involved in docking of synaptic vesicles at presynaptic active zones. The protein is Putative syntaxin-4 (syx-4) of Caenorhabditis elegans.